Here is a 481-residue protein sequence, read N- to C-terminus: Solute carrier family 46 member 2 (481 aa).

Topologically, residues 1-37 are cytoplasmic; sequence MGPEAAGPGRGAAPRLQVRTWIEPVVAATQVASSLYE. Residues 38–58 traverse the membrane as a helical segment; that stretch reads AGLLLVVKASFGAGAGAGAGA. The Extracellular segment spans residues 59-83; the sequence is ASNHSAGPPRGAPEDQQQRAISNFY. Asparagine 61 is a glycosylation site (N-linked (GlcNAc...) asparagine). The helical transmembrane segment at 84–104 threads the bilayer; sequence IVYNLVVGLTPLLSAYALGWL. At 105-113 the chain is on the cytoplasmic side; the sequence is SDRRHRKVA. A helical transmembrane segment spans residues 114-134; the sequence is ICVALLGFLLSRVGLLLKVLL. Residues 135 to 143 lie on the Extracellular side of the membrane; that stretch reads DWPVEVLYG. A helical membrane pass occupies residues 144–164; sequence AAALNGLCGGFSAFWAGVMAL. Residues 165–179 are Cytoplasmic-facing; it reads GSLGSSEGRRSVRLV. The helical transmembrane segment at 180–200 threads the bilayer; the sequence is LIDLILGLAGFCGSMASGHLF. Topologically, residues 201–210 are extracellular; that stretch reads KQVAGHSGQG. Residues 211–231 traverse the membrane as a helical segment; that stretch reads LVLTACSVSCATFALLYSLLV. Residues 232 to 286 are Cytoplasmic-facing; that stretch reads LKVPEAAAGSGQALSAGDSVAGTVGTYRTLDPDHSDKQSVQGLHPPSPGKAKPRR. Positions 263-282 are disordered; it reads PDHSDKQSVQGLHPPSPGKA. A helical transmembrane segment spans residues 287 to 307; the sequence is TIIALLFLGAIVYDLAVVGTV. Residues 308-326 are Extracellular-facing; that stretch reads DVMPLFVLREPLSWNQVQV. A helical membrane pass occupies residues 327 to 347; sequence GYGMAAGYTIFITSFLGVLVF. The Cytoplasmic portion of the chain corresponds to 348-353; the sequence is SRCFQD. The chain crosses the membrane as a helical span at residues 354–374; that stretch reads TTMIMIGMVSFGSGALLLAFV. Residues 375–376 are Extracellular-facing; the sequence is KE. A helical membrane pass occupies residues 377 to 397; that stretch reads TYMFYIARAVMLFALIPITTI. The Cytoplasmic portion of the chain corresponds to 398 to 412; the sequence is RSAMSKLIKGSSYGK. Residues 413–433 form a helical membrane-spanning segment; the sequence is VFVILQLSLTLTGVVTSTVYN. The Extracellular segment spans residues 434–446; it reads KIYQVTMEKFIGT. The helical transmembrane segment at 447 to 467 threads the bilayer; that stretch reads CFALSSFLSFLAIIPIGIVAY. Residues 468–481 are Cytoplasmic-facing; that stretch reads KQASWLQYGDVRET.

Belongs to the major facilitator superfamily. SLC46A family. Glycosylated. Highly expressed by the epididymal duct epithelium.

The protein resides in the endosome membrane. The protein localises to the cell membrane. The enzyme catalyses N-acetyl-beta-D-glucosaminyl-(1-&gt;4)-1,6-anhydro-N-acetyl-beta-D-muramoyl-L-alanyl-gamma-D-glutamyl-meso-2,6-diaminopimeloyl-D-alanine(out) + n H(+)(out) = N-acetyl-beta-D-glucosaminyl-(1-&gt;4)-1,6-anhydro-N-acetyl-beta-D-muramoyl-L-alanyl-gamma-D-glutamyl-meso-2,6-diaminopimeloyl-D-alanine(in) + n H(+)(in). It catalyses the reaction L-alanyl-gamma-D-glutamyl-meso-2,6-diaminopimelate(out) + n H(+)(out) = L-alanyl-gamma-D-glutamyl-meso-2,6-diaminopimelate(in) + n H(+)(in). It carries out the reaction N-acetyl-D-muramoyl-L-alanyl-D-isoglutamine(out) + n H(+)(out) = N-acetyl-D-muramoyl-L-alanyl-D-isoglutamine(in) + n H(+)(in). The catalysed reaction is 2',3'-cGAMP(out) + n H(+)(out) = 2',3'-cGAMP(in) + n H(+)(in). The enzyme catalyses 3',3'-cGAMP(out) + n H(+)(out) = 3',3'-cGAMP(in) + n H(+)(in). Functionally, proton-coupled transporter that delivers pathogen-associated or danger-associated molecular patterns to cytosolic pattern recognition receptors as part of the innate immune response to microbes or tissue injury. Has selectivity toward muropeptides that contain the amino acid diaminopimelic acid (DAP-type peptidoglycan muropeptides) including Tri-DAP and tracheal toxin (TCT), common in Gram-negative bacteria and Gram-positive bacilli. In the context of immune recognition of skin microbiota, shuttles bacterial muropeptides across the endolysosomal membranes into the cytosol for recognition by NOD1, triggering MYD88-dependent secretion of IL1A and neutrophil recruitment in a pyroptosis-type inflammatory process. To a lesser extent and redundantly, transports muramyl dipeptides derived from most bacterial proteoglycans, eliciting NOD2 receptor activation and downstream inflammatory responses. Postulated to function as an importer of cyclic GMP-AMP dinucleotides (cGAMPs) in monocyte and macrophage cell lineages. Selectively imports cGAMPs derived from pathogenic bacteria such as 3'3'-cGAMP thus providing for differential immune recognition of pathogenic versus commensal bacteria. During tumorigenesis may transport extracellular tumor-derived 2'3'-cGAMP across the plasma membrane of M1-polarized macrophages to activate the anti-tumoral stimulator of interferon genes (STING) pathway. The transport mechanism, its electrogenicity and stoichiometry remain to be elucidated. This is Solute carrier family 46 member 2 from Canis lupus familiaris (Dog).